The primary structure comprises 354 residues: Neutral protease 2 homolog SNOG_02177 (354 aa).

An N-terminal signal peptide occupies residues 1-19; sequence MKFQILSVAALASLASAVS. Residues 20 to 182 constitute a propeptide that is removed on maturation; the sequence is DALDKRDSPL…WIDLAKRTIV (163 aa). Intrachain disulfides connect Cys186-Cys257 and Cys264-Cys282. Asn214 is a glycosylation site (N-linked (GlcNAc...) asparagine). His306 provides a ligand contact to Zn(2+). Glu307 is a catalytic residue. His310 contributes to the Zn(2+) binding site.

It belongs to the peptidase M35 family. Zn(2+) is required as a cofactor.

It localises to the secreted. The enzyme catalyses Preferential cleavage of bonds with hydrophobic residues in P1'. Also 3-Asn-|-Gln-4 and 8-Gly-|-Ser-9 bonds in insulin B chain.. Secreted metalloproteinase that allows assimilation of proteinaceous substrates. Shows high activities on basic nuclear substrates such as histone and protamine. This is Neutral protease 2 homolog SNOG_02177 from Phaeosphaeria nodorum (strain SN15 / ATCC MYA-4574 / FGSC 10173) (Glume blotch fungus).